We begin with the raw amino-acid sequence, 232 residues long: Large ribosomal subunit protein uL1 (232 aa).

The protein belongs to the universal ribosomal protein uL1 family. Part of the 50S ribosomal subunit.

Functionally, binds directly to 23S rRNA. The L1 stalk is quite mobile in the ribosome, and is involved in E site tRNA release. Protein L1 is also a translational repressor protein, it controls the translation of the L11 operon by binding to its mRNA. The polypeptide is Large ribosomal subunit protein uL1 (Thermosipho melanesiensis (strain DSM 12029 / CIP 104789 / BI429)).